A 158-amino-acid polypeptide reads, in one-letter code: MKIIGIDPGTAIVGVGVLEKKNGKLIVKNFQAITTPPIAKEKRLKIIFQKLNEILIQEKPEIVVVEELFFSKNVKTAISVGEARGVVLLASALNDIPVLELKPVEVKTIVTGYGHAPKSQVEYMIAKLLGLKTPPKPDDVADALAIAYAGFLKMGGLL.

Residues Asp7, Glu66, and Asp139 contribute to the active site. Positions 7, 66, and 139 each coordinate Mg(2+).

It belongs to the RuvC family. In terms of assembly, homodimer which binds Holliday junction (HJ) DNA. The HJ becomes 2-fold symmetrical on binding to RuvC with unstacked arms; it has a different conformation from HJ DNA in complex with RuvA. In the full resolvosome a probable DNA-RuvA(4)-RuvB(12)-RuvC(2) complex forms which resolves the HJ. It depends on Mg(2+) as a cofactor.

It localises to the cytoplasm. The catalysed reaction is Endonucleolytic cleavage at a junction such as a reciprocal single-stranded crossover between two homologous DNA duplexes (Holliday junction).. In terms of biological role, the RuvA-RuvB-RuvC complex processes Holliday junction (HJ) DNA during genetic recombination and DNA repair. Endonuclease that resolves HJ intermediates. Cleaves cruciform DNA by making single-stranded nicks across the HJ at symmetrical positions within the homologous arms, yielding a 5'-phosphate and a 3'-hydroxyl group; requires a central core of homology in the junction. The consensus cleavage sequence is 5'-(A/T)TT(C/G)-3'. Cleavage occurs on the 3'-side of the TT dinucleotide at the point of strand exchange. HJ branch migration catalyzed by RuvA-RuvB allows RuvC to scan DNA until it finds its consensus sequence, where it cleaves and resolves the cruciform DNA. The protein is Crossover junction endodeoxyribonuclease RuvC of Carboxydothermus hydrogenoformans (strain ATCC BAA-161 / DSM 6008 / Z-2901).